The chain runs to 703 residues: uncharacterized protein (703 aa).

4 helical membrane-spanning segments follow: residues 23-43, 69-89, 143-163, and 250-270; these read IAMSGAISAGAYSAGVFDFLI, ALSGASAGAITAAIGVIAAGG, PVISVLNANVLTAIGAEALEA, and PPEWLAFANAALASGAFPIGL. Positions 23–335 constitute a PNPLA domain; that stretch reads IAMSGAISAG…INNDPFEFVR (313 aa). Residues 72-76 carry the GXSXG motif; it reads GASAG. S74 (nucleophile) is an active-site residue. The active-site Proton acceptor is the D322. The DGA/G signature appears at 322 to 324; sequence DGG. Transmembrane regions (helical) follow at residues 357-377, 432-452, and 644-664; these read VIMIAPFPEGPPFLGDGEPPL, ETFSIASGLLGGFGGFVLEAF, and ILSTLAGAAGANCQVWLAPWT.

Its subcellular location is the cell membrane. This is an uncharacterized protein from Sinorhizobium fredii (strain NBRC 101917 / NGR234).